We begin with the raw amino-acid sequence, 674 residues long: Polyunsaturated fatty acid 5-lipoxygenase (674 aa).

One can recognise a PLAT domain in the interval 2 to 118; it reads PSYTVTVATG…EIVLRDGRAK (117 aa). Residues Gly17, Thr18, Asp19, Asn44, Asp45, Glu47, Asp79, and Asp80 each coordinate Ca(2+). Residues 119 to 674 enclose the Lipoxygenase domain; that stretch reads LARDDQIHIL…PDRIPNSVAI (556 aa). Ser272 is subject to Phosphoserine. His368 and His373 together coordinate Fe cation. The residue at position 524 (Ser524) is a Phosphoserine. His551, Asn555, and Ile674 together coordinate Fe cation.

Belongs to the lipoxygenase family. As to quaternary structure, homodimer. Interacts with ALOX5AP and LTC4S. Interacts with COTL1, the interaction is required for stability and efficient catalytic activity. Interacts with PIK3R1; this interaction bridges ALOX5 with CD40 after CD40 ligation in B cells and leads to the production of reactive oxygen species (ROS). Interacts (via PLAT domain) with DICER1 (via Dicer dsRNA-binding fold domain); this interaction enhances arachidonate 5-lipoxygenase activity and modifies the miRNA precursor processing activity of DICER1. Requires Fe cation as cofactor. In terms of processing, serine phosphorylation by MAPKAPK2 is stimulated by arachidonic acid. Phosphorylation on Ser-524 by PKA has an inhibitory effect. Phosphorylation on Ser-272 prevents export from the nucleus. Phosphorylation at Ser-524 is stimulated by 8-bromo-3',5'-cyclic AMP or prostaglandin E2. In terms of tissue distribution, expressed in skin Langerhans cells and their emigrated counterparts in draining lymph nodes. Highly expressed in circulating leukocytes.

Its subcellular location is the cytoplasm. The protein resides in the nucleus matrix. It is found in the nucleus membrane. The protein localises to the perinuclear region. It localises to the cytosol. Its subcellular location is the nucleus envelope. The protein resides in the nucleus intermembrane space. The catalysed reaction is (5Z,8Z,11Z,14Z)-eicosatetraenoate + O2 = (5S)-hydroperoxy-(6E,8Z,11Z,14Z)-eicosatetraenoate. It carries out the reaction (5Z,8Z,11Z,14Z)-eicosatetraenoate + O2 = leukotriene A4 + H2O. The enzyme catalyses (5Z,8Z,11Z,14Z)-eicosatetraenoate + O2 = (8S)-hydroperoxy-(5Z,9E,11Z,14Z)-eicosatetraenoate. It catalyses the reaction (5Z,8Z,11Z,14Z)-eicosatetraenoate + O2 = (12S)-hydroperoxy-(5Z,8Z,10E,14Z)-eicosatetraenoate. The catalysed reaction is 18-HEPE + O2 = (5S)-hydroperoxy-18-hydroxy-(7E,9E,11Z,14Z,16E)-eicosapentaenoate. It carries out the reaction (18R)-hydroxy-(5Z,8Z,11Z,14Z,16E)-eicosapentaenoate + O2 = (5S)-hydroperoxy-(18R)-hydroxy-(6E,8Z,11Z,14Z,16E)-eicosapentaenoate. The enzyme catalyses (18S)-hydroxy-(5Z,8Z,11Z,14Z,16E)-eicosapentaenoate + O2 = (5S)-hydroperoxy-(18S)-hydroxy-(6E,8Z,11Z,14Z,16E)-eicosapentaenoate. It catalyses the reaction (5S)-hydroperoxy-(18S)-hydroxy-(6E,8Z,11Z,14Z,16E)-eicosapentaenoate = (5S,6S)-epoxy-(18S)-hydroxy-(7E,9E,11Z,14Z,16E)-eicosapentaenoate + H2O. The catalysed reaction is (5S)-hydroperoxy-(18R)-hydroxy-(6E,8Z,11Z,14Z,16E)-eicosapentaenoate = (5S,6S)-epoxy-(18R)-hydroxy-(7E,9E,11Z,14Z,16E)-eicosapentaenoate + H2O. It carries out the reaction (5S)-hydroperoxy-18-hydroxy-(7E,9E,11Z,14Z,16E)-eicosapentaenoate = (5S,6S)-epoxy-18-hydroxy-(7E,9E,11Z,14Z,16E)-eicosapentaenoate + H2O. The enzyme catalyses (15S)-hydroxy-(5Z,8Z,11Z,13E)-eicosatetraenoate + O2 = (5S)-hydroperoxy-(15S)-hydroxy-(6E,8Z,11Z,13E)-eicosatetraenoate. It catalyses the reaction (5S)-hydroperoxy-(6E,8Z,11Z,14Z)-eicosatetraenoate = leukotriene A4 + H2O. The catalysed reaction is (5Z,8Z)-eicosadienoate + O2 = (5S)-hydroperoxy-(6E,8Z)-eicosadienoate. It carries out the reaction (12S)-hydroxy-(5Z,8Z,10E,14Z)-eicosatetraenoate + O2 = (5S)-hydroperoxy-(12S)-hydroxy-(6E,8Z,10E,14Z)-eicosatetraenoate. The enzyme catalyses (5Z,8Z,11Z,14Z,17Z)-eicosapentaenoate + O2 = 5-hydroperoxy-(6E,8Z,11Z,14Z,17Z)-eicosapentaenoate. It catalyses the reaction (4Z,7Z,10Z,13Z,16Z,19Z)-docosahexaenoate + O2 = (14S)-hydroperoxy-(4Z,7Z,10Z,12E,16Z,19Z)-docosahexaenoate. The catalysed reaction is (4Z,7Z,10Z,13Z,16Z,19Z)-docosahexaenoate + O2 = (7S)-hydroperoxy-(4Z,8E,10Z,13Z,16Z,19Z)-docosahexaenoate. It carries out the reaction (4Z,7Z,10Z,13Z,16Z,19Z)-docosahexaenoate + O2 = (17S)-hydroperoxy-(4Z,7Z,10Z,13Z,15E,19Z)-docosahexaenoate. Its pathway is lipid metabolism; leukotriene A4 biosynthesis. Its function is as follows. Catalyzes the oxygenation of arachidonate to 5-hydroperoxyeicosatetraenoate (5-HPETE) followed by the dehydration to 5,6- epoxyeicosatetraenoate (Leukotriene A4/LTA4), the first two steps in the biosynthesis of leukotrienes, which are potent mediators of inflammation. Also catalyzes the oxygenation of arachidonic acid into 8-hydroperoxyicosatetraenoic acid (8-HPETE) and 12-hydroperoxyicosatetraenoic acid (12-HPETE). Displays lipoxin synthase activity being able to convert (15S)-HETE into a conjugate tetraene. Although arachidonate is the preferred substrate, this enzyme can also metabolize oxidized fatty acids derived from arachidonate such as (15S)-HETE, eicosapentaenoate (EPA) such as (18R)- and (18S)-HEPE or docosahexaenoate (DHA) which lead to the formation of specialized pro-resolving mediators (SPM) lipoxin and resolvins E and D respectively, therefore it participates in anti-inflammatory responses. Oxidation of DHA directly inhibits endothelial cell proliferation and sprouting angiogenesis via peroxisome proliferator-activated receptor gamma (PPARgamma). It does not catalyze the oxygenation of linoleic acid and does not convert (5S)-HETE to lipoxin isomers. In addition to inflammatory processes, participates in dendritic cell migration, wound healing through an antioxidant mechanism based on heme oxygenase-1 (HO-1) regulation expression, monocyte adhesion to the endothelium via ITGAM expression on monocytes. Moreover, it helps establish an adaptive humoral immunity by regulating primary resting B cells and follicular helper T cells and participates in the CD40-induced production of reactive oxygen species (ROS) after CD40 ligation in B cells through interaction with PIK3R1 that bridges ALOX5 with CD40. May also play a role in glucose homeostasis, regulation of insulin secretion and palmitic acid-induced insulin resistance via AMPK. Can regulate bone mineralization and fat cell differentiation increases in induced pluripotent stem cells. The sequence is that of Polyunsaturated fatty acid 5-lipoxygenase from Mus musculus (Mouse).